The sequence spans 114 residues: Transcription initiation factor IIA subunit 2 (114 aa).

Belongs to the TFIIA subunit 2 family. As to quaternary structure, TFIIA is a heterodimer composed of the large toa1 and the small toa2 subunits.

The protein resides in the nucleus. In terms of biological role, TFIIA is a component of the transcription machinery of RNA polymerase II and plays an important role in transcriptional activation. TFIIA in a complex with tbp mediates transcriptional activity. The chain is Transcription initiation factor IIA subunit 2 (toa2) from Fusarium vanettenii (strain ATCC MYA-4622 / CBS 123669 / FGSC 9596 / NRRL 45880 / 77-13-4) (Fusarium solani subsp. pisi).